The sequence spans 338 residues: DNA-directed RNA polymerase subunit alpha (338 aa).

The alpha N-terminal domain (alpha-NTD) stretch occupies residues 1–234; sequence MIQKNWQELI…DQLQLFINFE (234 aa). Residues 250–338 form an alpha C-terminal domain (alpha-CTD) region; it reads FNKNLLRKVD…ELAKKLEEPY (89 aa).

This sequence belongs to the RNA polymerase alpha chain family. As to quaternary structure, homodimer. The RNAP catalytic core consists of 2 alpha, 1 beta, 1 beta' and 1 omega subunit. When a sigma factor is associated with the core the holoenzyme is formed, which can initiate transcription.

The catalysed reaction is RNA(n) + a ribonucleoside 5'-triphosphate = RNA(n+1) + diphosphate. Functionally, DNA-dependent RNA polymerase catalyzes the transcription of DNA into RNA using the four ribonucleoside triphosphates as substrates. The protein is DNA-directed RNA polymerase subunit alpha of Paramagnetospirillum magneticum (strain ATCC 700264 / AMB-1) (Magnetospirillum magneticum).